The chain runs to 510 residues: DNA-directed RNA polymerase I subunit RPA34 (510 aa).

Position 1 is an N-acetylmethionine (Met1). A disordered region spans residues 1–31 (MEEPQAGDAARFSCPPNFTAKPPASESPRFS). Ser27 carries the post-translational modification Phosphoserine. A Phosphotyrosine modification is found at Tyr80. Residues 120-143 (GPQQSLSGSPLQPIPASPPPQIPP) are disordered. 4 positions are modified to phosphoserine: Ser128, Ser136, Ser172, and Ser205. Residues 131–143 (QPIPASPPPQIPP) are compositionally biased toward pro residues. The interval 203-510 (LGSPEMDVRK…KRKQQQQQPV (308 aa)) is disordered. The segment covering 258-270 (GKETFEPEDKTVK) has biased composition (basic and acidic residues). Lys270 is covalently cross-linked (Glycyl lysine isopeptide (Lys-Gly) (interchain with G-Cter in SUMO1); alternate). Residue Lys270 forms a Glycyl lysine isopeptide (Lys-Gly) (interchain with G-Cter in SUMO2); alternate linkage. Ser285 bears the Phosphoserine mark. At Thr287 the chain carries Phosphothreonine. Ser309 bears the Phosphoserine mark. Lys314 is covalently cross-linked (Glycyl lysine isopeptide (Lys-Gly) (interchain with G-Cter in SUMO1); alternate). Lys314 participates in a covalent cross-link: Glycyl lysine isopeptide (Lys-Gly) (interchain with G-Cter in SUMO2); alternate. Composition is skewed to low complexity over residues 372-382 (AKPQAQAALAA) and 394-407 (DATVEPETEVVGPE). The span at 421–430 (TKKKKKKKER) shows a compositional bias: basic residues. Residues 436–452 (EPIQPLEPELPGEGQPE) show a composition bias toward low complexity. A Phosphoserine modification is found at Ser490.

The protein belongs to the eukaryotic RPA34 RNA polymerase subunit family. In terms of assembly, component of the RNA polymerase I (Pol I) complex consisting of 13 subunits: a ten-subunit catalytic core composed of POLR1A/RPA1, POLR1B/RPA2, POLR1C/RPAC1, POLR1D/RPAC2, POLR1H/RPA12, POLR2E/RPABC1, POLR2F/RPABC2, POLR2H/RPABC3, POLR2K/RPABC4 and POLR2L/RPABC5; a mobile stalk subunit POLR1F/RPA43 protruding from the core and additional subunits homologous to general transcription factors POLR1E/RPA49 and POLR1G/RPA34. Forms a heterodimer with POLR1E/RPA49. Part of Pol I pre-initiation complex (PIC), in which Pol I core assembles with RRN3 and promoter-bound UTBF and SL1/TIF-IB complex. Interacts with TAF1A thereby associates with the SL1/TIF-IB complex. Interacts with UBTF. Interacts with POLR1E/PRAF1 through its N-terminal region. As to quaternary structure, interacts with CD3E. In terms of processing, undergoes tyrosine phosphorylation upon T-cell receptor (TCR) stimulation. This phosphorylation has not been confirmed by other groups. Post-translationally, phosphorylated on tyrosine residues in initiation-competent Pol I-beta complexes but not in Pol I-alpha complexes.

It is found in the nucleus. It localises to the nucleolus. Its subcellular location is the chromosome. Functionally, component of RNA polymerase I (Pol I), a DNA-dependent RNA polymerase which synthesizes ribosomal RNA precursors using the four ribonucleoside triphosphates as substrates. Involved in UBTF-activated transcription, presumably at a step following PIC formation. Its function is as follows. Has been described as a component of preformed T-cell receptor (TCR) complex. This Homo sapiens (Human) protein is DNA-directed RNA polymerase I subunit RPA34.